Consider the following 450-residue polypeptide: MPSPTSSSASVFSSHLFFVFCIFSQIAQSYAQFNRFFDPSIPEQETVLTDYDYNMIGHFRENDQWFVNDSAMYNPLRFEGDIANSGLNSRSINTFFGDSPLFGIFGVQRNAVRQTYLKWEQARIPYTISSQYSSYSRSKIAEAIEEYRKKTCIDFSPKSAGDLDYIHIVPDDGCYSLVGRIGGKQPVSLGDGCIQKGIIIHELMHAVGFFHEQSRADRDEYVKINWSNVEAGLQDQFDKYSLNMIDHLGTKYDYGSVMHYAPTAFSKNGKPTIEPIEKNVEIGQRAGFSENDIYKINMLYNCPTFTATTLAPENTKRVKSITKKVTSATGSPLSKKGEIGSSIGDKGDRGDNSVLSSLISIHSGLGKCEDRRKDCEFLARAGHCESRFSIRFMTENCANSCGKCIAEEKRKEVCEDARTWCERWANSGMCNQTVFKDYMRQKCAKSCNFC.

Positions 1 to 31 (MPSPTSSSASVFSSHLFFVFCIFSQIAQSYA) are cleaved as a signal peptide. A glycan (N-linked (GlcNAc...) asparagine) is linked at N68. The Peptidase M12A domain maps to 110–303 (NAVRQTYLKW…YKINMLYNCP (194 aa)). 2 cysteine pairs are disulfide-bonded: C152-C302 and C174-C193. H201 contributes to the Zn(2+) binding site. E202 is a catalytic residue. The Zn(2+) site is built by H205 and H211. N225 carries an N-linked (GlcNAc...) asparagine glycan. The Cell attachment site signature appears at 349–351 (RGD). 6 disulfide bridges follow: C368-C404, C375-C397, C384-C401, C414-C450, C421-C443, and C430-C447. 2 consecutive ShKT domains span residues 368–404 (CEDR…CGKC) and 414–450 (CEDA…CNFC). N431 carries an N-linked (GlcNAc...) asparagine glycan.

It depends on Zn(2+) as a cofactor.

Its subcellular location is the secreted. Its function is as follows. Metalloprotease. The polypeptide is Zinc metalloproteinase nas-13 (nas-13) (Caenorhabditis elegans).